The following is a 191-amino-acid chain: dCTP deaminase, dUMP-forming (191 aa).

DCTP contacts are provided by residues 101–106 (KSSLGR), Asp119, 127–129 (TLE), Gln148, Tyr162, and Gln174. Glu129 functions as the Proton donor/acceptor in the catalytic mechanism. A disordered region spans residues 163–191 (GSPVYGSRYQGQRGPTPSRSWQNFHRTKI). Residues 171-191 (YQGQRGPTPSRSWQNFHRTKI) are compositionally biased toward polar residues.

This sequence belongs to the dCTP deaminase family. In terms of assembly, homotrimer.

It carries out the reaction dCTP + 2 H2O = dUMP + NH4(+) + diphosphate. Its pathway is pyrimidine metabolism; dUMP biosynthesis; dUMP from dCTP: step 1/1. Its function is as follows. Bifunctional enzyme that catalyzes both the deamination of dCTP to dUTP and the hydrolysis of dUTP to dUMP without releasing the toxic dUTP intermediate. In Acidothermus cellulolyticus (strain ATCC 43068 / DSM 8971 / 11B), this protein is dCTP deaminase, dUMP-forming.